A 510-amino-acid chain; its full sequence is MVKHDSEVELSEEDFYMQRVSMVRKEMKEGASMYPHKFQISHSFQEILQEIEKTSTQFVGEDVVRSAGRIMSMRLHARFCFFVVTSNGESLQVVVDTKEAGREQMAKFLRRGDVVGFTGNPGRTRTLEASVFATDIIVLTPCLRTIPTEHFGLKDPETIYRKRYMDLLINRESRNRFQKRAQIIGYIRSFLDSRGFLEVETPMMNLIPGGAAAKPFITHHNELKLDLYMRVSPELYLKKLVVGGLERVYEIGKQFRNEGIDLTHNPEFTSCEFYMAYADYNDLMEMTEELISGMVENMFGTDTIVYSPKKREERTESVELSFKRPFRVISILEELNARLGLDLSGETLDREETLEKLLSACDKEGLSVEKPRTLSRVLDKLIGHVIEPQCVNPTFVKDHPIAMSPLAKNHRSKAGLTERFELFINCKEICNAYTELNNPFEQRERFLQQTQDLNAGDDEAMMNDEDFCTALEYGLPPTGGWGIGIDRLVMYLTDAANIRDVIFFPTMKPE.

Belongs to the class-II aminoacyl-tRNA synthetase family. Homodimer.

It localises to the cytoplasm. It carries out the reaction tRNA(Lys) + L-lysine + ATP = L-lysyl-tRNA(Lys) + AMP + diphosphate. In Encephalitozoon cuniculi (strain GB-M1) (Microsporidian parasite), this protein is Probable lysine--tRNA ligase, cytoplasmic.